Consider the following 191-residue polypeptide: Crossover junction endodeoxyribonuclease RuvC (191 aa).

Residues Asp-7, Glu-67, and Asp-141 contribute to the active site. Mg(2+) contacts are provided by Asp-7, Glu-67, and Asp-141.

This sequence belongs to the RuvC family. Homodimer which binds Holliday junction (HJ) DNA. The HJ becomes 2-fold symmetrical on binding to RuvC with unstacked arms; it has a different conformation from HJ DNA in complex with RuvA. In the full resolvosome a probable DNA-RuvA(4)-RuvB(12)-RuvC(2) complex forms which resolves the HJ. The cofactor is Mg(2+).

The protein localises to the cytoplasm. It carries out the reaction Endonucleolytic cleavage at a junction such as a reciprocal single-stranded crossover between two homologous DNA duplexes (Holliday junction).. The RuvA-RuvB-RuvC complex processes Holliday junction (HJ) DNA during genetic recombination and DNA repair. Endonuclease that resolves HJ intermediates. Cleaves cruciform DNA by making single-stranded nicks across the HJ at symmetrical positions within the homologous arms, yielding a 5'-phosphate and a 3'-hydroxyl group; requires a central core of homology in the junction. The consensus cleavage sequence is 5'-(A/T)TT(C/G)-3'. Cleavage occurs on the 3'-side of the TT dinucleotide at the point of strand exchange. HJ branch migration catalyzed by RuvA-RuvB allows RuvC to scan DNA until it finds its consensus sequence, where it cleaves and resolves the cruciform DNA. The protein is Crossover junction endodeoxyribonuclease RuvC of Myxococcus xanthus (strain DK1622).